The following is a 78-amino-acid chain: Acyl carrier protein (78 aa).

Positions 1–76 (MSVAEKVKEI…DAISFIEKKK (76 aa)) constitute a Carrier domain. Position 36 is an O-(pantetheine 4'-phosphoryl)serine (Ser36).

Belongs to the acyl carrier protein (ACP) family. Post-translationally, 4'-phosphopantetheine is transferred from CoA to a specific serine of apo-ACP by AcpS. This modification is essential for activity because fatty acids are bound in thioester linkage to the sulfhydryl of the prosthetic group.

It localises to the cytoplasm. Its pathway is lipid metabolism; fatty acid biosynthesis. Its function is as follows. Carrier of the growing fatty acid chain in fatty acid biosynthesis. This is Acyl carrier protein from Solidesulfovibrio magneticus (strain ATCC 700980 / DSM 13731 / RS-1) (Desulfovibrio magneticus).